The primary structure comprises 1004 residues: Hyaluronate lyase HylB (1004 aa).

A signal peptide spans 1–29; the sequence is MKNRKIWVMLVGLFTALTNGFMGTTLTFA. Catalysis depends on residues histidine 468, tyrosine 477, and arginine 531.

It belongs to the polysaccharide lyase 8 family.

It localises to the secreted. The enzyme catalyses [hyaluronan](n) = n 3-(4-deoxy-beta-D-gluc-4-enuronosyl)-N-acetyl-D-glucosamine + H2O. It carries out the reaction Eliminative degradation of polysaccharides containing 1,4-beta-D-hexosaminyl and 1,3-beta-D-glucuronosyl linkages to disaccharides containing 4-deoxy-beta-D-gluc-4-enuronosyl groups.. In terms of biological role, degrades hyaluronic acid (HA) and chondroitin sulfate (CS) A in vitro. Is not active against heparin sodium salt (HS). Involved in the pathogenesis of vancomycin-resistant E.faecalis infections. Contributes to attenuation of the lipopolysaccharide (LPS)-mediated nuclear factor (NF)-kappa-B activation assayed in the mouse RAW-Blue reporter macrophages. In Enterococcus faecalis (strain ATCC 700802 / V583), this protein is Hyaluronate lyase HylB.